A 911-amino-acid polypeptide reads, in one-letter code: Inositol 1,4,5-triphosphate receptor associated 1 (911 aa).

A compositionally biased stretch (basic and acidic residues) spans 1 to 11; that stretch reads MVKAPQSEERL. Disordered regions lie at residues 1–21, 39–122, 174–405, and 478–498; these read MVKA…NNSV, EVPG…HRHL, LTRR…GPRL, and EQEK…ESKG. Over residues 68–86 the composition is skewed to polar residues; sequence AAQSPAGQDPATTGISCSP. Over residues 111–122 the composition is skewed to basic residues; it reads HSPHRRLSHRHL. Phosphoserine is present on Ser-118. Positions 152–184 are interaction with PRKG1; sequence SEEDKKKNLALLEEAKLVSERFLTRRGRKSRSS. Residues 183-212 are compositionally biased toward polar residues; that stretch reads SSPGESSPAVSPNLSPGASPASSQSNSLTV. Positions 277–292 are enriched in basic and acidic residues; sequence TVEKSKEITIEQKENF. Phosphoserine is present on Ser-393. The tract at residues 534 to 580 is interaction with ITPR1; the sequence is NVFVQLSLAFRNDSYTLESRINQAERERNLTEENTEKELENFKASIT. Residues 547–645 are a coiled coil; the sequence is SYTLESRINQ…MQYVENLKRT (99 aa). Ser-683 and Ser-696 each carry phosphoserine. Disordered stretches follow at residues 706–766 and 787–829; these read LNLP…TPSC and YQEG…KEQR. The segment covering 708–728 has biased composition (low complexity); sequence LPGQSPSSSPIPSLPALSESS. The span at 790–801 shows a compositional bias: basic and acidic residues; it reads GLKKTKELQGLR. Residues 802 to 825 show a composition bias toward acidic residues; sequence EEEEEQKSESPEEPEEVAETEEEE. Residues 853–873 form a helical membrane-spanning segment; the sequence is VIWMMAAAMLVLTVVLGLYGS.

In terms of assembly, interacts with PRKG1/cGKI-beta and ITPR1/IP3R type I. Part of cGMP kinase signaling complex at least composed of ACTA2/alpha-actin, CNN1/calponin H1, PLN/phospholamban, PRKG1 and ITPR1. Interacts with HCN4; regulates HCN4 channel activity. Phosphorylated by PRKG1/cGKI-beta. Phosphorylation at Ser-696 is necessary for PRKG1-induced calcium release in the cytosol. As to expression, highly expressed in trachea, aorta and uterus.

It localises to the sarcoplasmic reticulum. It is found in the cytoplasm. The protein resides in the perinuclear region. The protein localises to the membrane. Functionally, plays a role as NO/PRKG1-dependent regulator of IP3-induced calcium release; its phosphorylation by PRKG1 inhibits bradykinin and IP3-induced calcium release from intracellular stores. Recruits PRKG1 to the endoplasmic reticulum and may mediate the assembly of PRKG1 and ITPR1 in a macrocomplex. Involved in PRKG1 signaling cascade leading to inhibition of platelet activation and aggregation. Also mediates NO-dependent inhibition of calcium signaling in gastrointestinal smooth muscle contributing to NO-dependent relaxation. Plays a role in the regulation of cellular excitability by regulating the hyperpolarization-activated cyclic nucleotide-gated HCN4 channel activity. This Bos taurus (Bovine) protein is Inositol 1,4,5-triphosphate receptor associated 1 (IRAG1).